A 151-amino-acid chain; its full sequence is Large ribosomal subunit protein uL22 (151 aa).

Residues 1-18 (MARINYSINGDPETTSKA) are compositionally biased toward polar residues. A disordered region spans residues 1-23 (MARINYSINGDPETTSKAMGSEL).

The protein belongs to the universal ribosomal protein uL22 family. Part of the 50S ribosomal subunit.

Its function is as follows. This protein binds specifically to 23S rRNA. It makes multiple contacts with different domains of the 23S rRNA in the assembled 50S subunit and ribosome. The globular domain of the protein is located near the polypeptide exit tunnel on the outside of the subunit, while an extended beta-hairpin is found that lines the wall of the exit tunnel in the center of the 70S ribosome. This chain is Large ribosomal subunit protein uL22, found in Methanosarcina acetivorans (strain ATCC 35395 / DSM 2834 / JCM 12185 / C2A).